The sequence spans 251 residues: L,D-transpeptidase 1 (251 aa).

A signal peptide spans 1–28 (MRRVVRYLSVVVAITLMLTAESVSIATA). Residues 125–250 (LIGVASISAH…VTVGDPIEVV (126 aa)) enclose the L,D-TPase catalytic domain. Substrate-binding positions include Tyr-190 and 203-204 (SG). His-208 (proton donor/acceptor) is an active-site residue. The Nucleophile role is filled by Cys-226. Asn-228 contributes to the substrate binding site.

Monomer.

The protein resides in the periplasm. It functions in the pathway cell wall biogenesis; peptidoglycan biosynthesis. Is irreversibly inactivated by the beta-lactams carbapenems via the formation of a covalent adduct resulting from acylation of the catalytic Cys. Its function is as follows. Generates 3-&gt;3 cross-links in peptidoglycan, catalyzing the cleavage of the mDap(3)-D-Ala(4) bond of a tetrapeptide donor stem and the formation of a bond between the carbonyl of mDap(3) of the donor stem and the side chain of mDap(3) of the acceptor stem. Is specific for donor substrates containing a stem tetrapeptide since it cannot use pentapeptide stems. In Mycobacterium tuberculosis (strain CDC 1551 / Oshkosh), this protein is L,D-transpeptidase 1 (ldtA).